The sequence spans 319 residues: Melanoma-associated antigen B2 (319 aa).

A compositionally biased stretch (basic residues) spans 1–17 (MPRGQKSKLRAREKRRK). Positions 1–112 (MPRGQKSKLR…TKSPSEDPLT (112 aa)) are disordered. Low complexity-rich tracts occupy residues 39–57 (PCCS…PAAG), 67–79 (TTAA…VSST), and 94–105 (ASSSQASTSTKS). Phosphoserine occurs at positions 77 and 105. One can recognise an MAGE domain in the interval 111-310 (LTRKSGSLVQ…CAFPTHYEEA (200 aa)).

In terms of assembly, interacts with TRIM28. In terms of tissue distribution, expressed in testis and placenta, and in a significant fraction of tumors of various histologic types.

May enhance ubiquitin ligase activity of RING-type zinc finger-containing E3 ubiquitin-protein ligases. Proposed to act through recruitment and/or stabilization of the Ubl-conjugating enzyme (E2) at the E3:substrate complex. The chain is Melanoma-associated antigen B2 (MAGEB2) from Homo sapiens (Human).